Consider the following 575-residue polypeptide: Cyclic nucleotide-gated channel alpha-4 (575 aa).

Over 1-38 (MSQDSKVKTTESTPPAPTKARKWLPVLDPSGDYYYWWL) the chain is Cytoplasmic. A helical membrane pass occupies residues 39-60 (NTMVFPIMYNLIIVVCRACFPD). The Extracellular portion of the chain corresponds to 61-70 (LQHSYLVAWF). A helical transmembrane segment spans residues 71–91 (VLDYTSDLLYLLDIGVRFHTG). Residues 92-116 (FLEQGILVVDKSMIASRYVRTWSFL) are Cytoplasmic-facing. Residues 117–135 (LDLASLVPTDAAYVQLGPH) form a helical membrane-spanning segment. Over 136 to 140 (IPTLR) the chain is Extracellular. A helical membrane pass occupies residues 141–159 (LNRFLRVPRLFEAFDRTET). The Cytoplasmic portion of the chain corresponds to 160–166 (RTAYPNA). The tract at residues 164–272 (PNAFRIAKLM…GSMSSVIYNM (109 aa)) is ion conduction pathway. Residues 167–190 (FRIAKLMIYIFVVIHWNSCLYFAL) form a helical membrane-spanning segment. Topologically, residues 191-213 (SRYLGFGRDAWVYPDPAQPGFER) are extracellular. A run of 2 helical transmembrane segments spans residues 214 to 248 (LRRQ…LFMV) and 249 to 273 (GDFL…YNMN). The segment at 231-234 (TVGD) is selectivity filter. A C-linker region spans residues 274–350 (TADAAFYPDH…STLSRVQIFQ (77 aa)). The Cytoplasmic segment spans residues 274–575 (TADAAFYPDH…AGQEGPSGLE (302 aa)). Positions 292–302 (LQHVNRRLERR) match the IQ-type motif. 348-471 (IFQNCEASLL…AVMEEKGREI (124 aa)) is an a nucleoside 3',5'-cyclic phosphate binding site. The cyclic nucleotide-binding domain stretch occupies residues 354–474 (ASLLEELVLK…EEKGREILLK (121 aa)). The 3',5'-cyclic GMP site is built by Gly414, Ser417, Arg430, and Thr431. 3',5'-cyclic AMP-binding residues include Arg430 and Thr431. Residues 493–547 (TESRLKGLDQQLDDLQTKFARLLAELESSALKIAYRIERLEWQTREWPMPDDMGE) adopt a coiled-coil conformation. The disordered stretch occupies residues 536–575 (TREWPMPDDMGEADDEAEPGEGTSKDGEEKAGQEGPSGLE). Over residues 544–554 (DMGEADDEAEP) the composition is skewed to acidic residues. Basic and acidic residues predominate over residues 558 to 567 (TSKDGEEKAG).

Belongs to the cyclic nucleotide-gated cation channel (TC 1.A.1.5) family. CNGA4 subfamily. As to quaternary structure, the olfactory cyclic nucleotide-gated channel is an heterotetramer composed of CNGA2, CNGA4 and CNGB1b subunits with 2:1:1 stoichiometry. In terms of tissue distribution, expressed in the olfactory epithelium.

The protein resides in the cell projection. It is found in the cilium membrane. The catalysed reaction is Ca(2+)(in) = Ca(2+)(out). It catalyses the reaction Na(+)(in) = Na(+)(out). The enzyme catalyses K(+)(in) = K(+)(out). It carries out the reaction NH4(+)(in) = NH4(+)(out). The catalysed reaction is Rb(+)(in) = Rb(+)(out). It catalyses the reaction Li(+)(in) = Li(+)(out). The enzyme catalyses Cs(+)(in) = Cs(+)(out). With respect to regulation, ca(2+)-calmodulin exerts its inhibitory effect in cAMP sensitivity by binding to IQ-like motif of CNGA4 and preferably binds to the channel in the closed state. Inhibition by PIP3 of the CNG channel probably occurs via CGNA2 binding. Pore-forming subunit of the olfactory cyclic nucleotide-gated channel. Operates in the cilia of olfactory sensory neurons where chemical stimulation of the odorant is converted to an electrical signal. Mediates odorant-induced cAMP-dependent Ca(2+) influx triggering neuron depolarization. The rise of intracellular Ca(2+) levels potentiates the olfactory response by activating Ca(2+)-dependent Cl(-) channels, but it also serves as a negative feedback signal to desensitize the channel for rapid adaptation to odorants. Conducts cGMP- and cAMP-gated ion currents, with permeability for monovalent and divalent cations. Conducts cAMP- and cGMP-gated ion currents, with permeability for monovalent and divalent cations. May conduct nitric oxide-gated Ca(2+) currents relevant to neurons of vomeronasal organ, a system involved in the perception of pheromones. The polypeptide is Cyclic nucleotide-gated channel alpha-4 (Mus musculus (Mouse)).